The primary structure comprises 451 residues: Serine--tRNA ligase, cytoplasmic (451 aa).

236–238 contacts L-serine; that stretch reads TSE. Residues 267-269 and Val-283 contribute to the ATP site; that span reads RKE. Residue Glu-290 participates in L-serine binding. Residue 354 to 357 coordinates ATP; sequence ELVS. Thr-392 provides a ligand contact to L-serine.

The protein belongs to the class-II aminoacyl-tRNA synthetase family. Type-1 seryl-tRNA synthetase subfamily. In terms of assembly, homodimer. The tRNA molecule binds across the dimer.

The protein resides in the cytoplasm. It carries out the reaction tRNA(Ser) + L-serine + ATP = L-seryl-tRNA(Ser) + AMP + diphosphate + H(+). The catalysed reaction is tRNA(Sec) + L-serine + ATP = L-seryl-tRNA(Sec) + AMP + diphosphate + H(+). It participates in aminoacyl-tRNA biosynthesis; selenocysteinyl-tRNA(Sec) biosynthesis; L-seryl-tRNA(Sec) from L-serine and tRNA(Sec): step 1/1. In terms of biological role, catalyzes the attachment of serine to tRNA(Ser). Is also able to aminoacylate tRNA(Sec) with serine, to form the misacylated tRNA L-seryl-tRNA(Sec), which will be further converted into selenocysteinyl-tRNA(Sec). This is Serine--tRNA ligase, cytoplasmic (serS) from Dictyostelium discoideum (Social amoeba).